A 294-amino-acid chain; its full sequence is Ribosomal protein L11 methyltransferase (294 aa).

4 residues coordinate S-adenosyl-L-methionine: Thr144, Gly165, Asp187, and Asn229.

Belongs to the methyltransferase superfamily. PrmA family.

The protein resides in the cytoplasm. It carries out the reaction L-lysyl-[protein] + 3 S-adenosyl-L-methionine = N(6),N(6),N(6)-trimethyl-L-lysyl-[protein] + 3 S-adenosyl-L-homocysteine + 3 H(+). In terms of biological role, methylates ribosomal protein L11. This Pseudomonas aeruginosa (strain LESB58) protein is Ribosomal protein L11 methyltransferase.